The primary structure comprises 691 residues: Elongation factor G (691 aa).

In terms of domain architecture, tr-type G spans 8-282 (ERVRNIGIAA…AVVNYLPAPV (275 aa)). Residues 17–24 (AHIDAGKT), 81–85 (DTPGH), and 135–138 (NKMD) each bind GTP.

This sequence belongs to the TRAFAC class translation factor GTPase superfamily. Classic translation factor GTPase family. EF-G/EF-2 subfamily.

It localises to the cytoplasm. Catalyzes the GTP-dependent ribosomal translocation step during translation elongation. During this step, the ribosome changes from the pre-translocational (PRE) to the post-translocational (POST) state as the newly formed A-site-bound peptidyl-tRNA and P-site-bound deacylated tRNA move to the P and E sites, respectively. Catalyzes the coordinated movement of the two tRNA molecules, the mRNA and conformational changes in the ribosome. This is Elongation factor G from Prochlorococcus marinus (strain NATL2A).